A 109-amino-acid chain; its full sequence is uncharacterized protein (109 aa).

The protein resides in the mitochondrion. This is an uncharacterized protein from Marchantia polymorpha (Common liverwort).